Reading from the N-terminus, the 261-residue chain is Calcium-binding protein 8 (261 aa).

The interval 1–39 (MRLPEQPGEGKPENEKKGDGGALGGGEEPPRSQAPDFPT) is disordered. Residues 1-234 (MRLPEQPGEG…QNRQTCVRKS (234 aa)) lie on the Cytoplasmic side of the membrane. Positions 8 to 19 (GEGKPENEKKGD) are enriched in basic and acidic residues. 2 consecutive EF-hand domains span residues 78–113 (EELD…LGYM) and 114–149 (PSEV…KLVS). Ca(2+) is bound by residues Asp91, Asp93, Asn95, Glu102, Asp127, Asp129, Asp131, Gln133, and Glu138. A helical; Anchor for type IV membrane protein transmembrane segment spans residues 235–255 (LICAFAMAFIISVMLIAANQI). Over 256–261 (LRSGME) the chain is Extracellular.

Interacts with PI4KB. This binding competes with FREQ/NCS1 binding in a calcium-dependent manner. As to expression, brain specific.

It localises to the golgi apparatus. It is found in the trans-Golgi network membrane. The protein resides in the cytoplasm. The protein localises to the perinuclear region. Its subcellular location is the cell membrane. Negatively regulates Golgi-to-plasma membrane trafficking by interacting with PI4KB and inhibiting its activity. May play a role in the physiology of neurons and is potentially important in memory and learning. This chain is Calcium-binding protein 8 (CALN1), found in Homo sapiens (Human).